We begin with the raw amino-acid sequence, 313 residues long: 3'-5' exoribonuclease YhaM (313 aa).

Positions 22–90 (SSVKGTASNG…QLKIRQIRQA (69 aa)) form a DNA-binding region, OB. The HD domain occupies 163–279 (HVVSMLRLAK…LHQIDLMDAS (117 aa)).

It belongs to the YhaM family.

Its function is as follows. Shows a 3'-5' exoribonuclease activity. The protein is 3'-5' exoribonuclease YhaM of Listeria innocua serovar 6a (strain ATCC BAA-680 / CLIP 11262).